We begin with the raw amino-acid sequence, 363 residues long: Sulfate/thiosulfate import ATP-binding protein CysA (363 aa).

The region spanning 3–237 (IEINNISKYF…PATRFVLEFL (235 aa)) is the ABC transporter domain. 35–42 (GPSGSGKT) contacts ATP.

The protein belongs to the ABC transporter superfamily. Sulfate/tungstate importer (TC 3.A.1.6) family. In terms of assembly, the complex is composed of two ATP-binding proteins (CysA), two transmembrane proteins (CysT and CysW) and a solute-binding protein (CysP).

It is found in the cell inner membrane. It catalyses the reaction sulfate(out) + ATP + H2O = sulfate(in) + ADP + phosphate + H(+). It carries out the reaction thiosulfate(out) + ATP + H2O = thiosulfate(in) + ADP + phosphate + H(+). In terms of biological role, part of the ABC transporter complex CysAWTP involved in sulfate/thiosulfate import. Responsible for energy coupling to the transport system. The chain is Sulfate/thiosulfate import ATP-binding protein CysA from Yersinia pseudotuberculosis serotype I (strain IP32953).